Reading from the N-terminus, the 141-residue chain is Galactose-6-phosphate isomerase subunit LacA (141 aa).

Belongs to the LacAB/RpiB family. As to quaternary structure, heteromultimeric protein consisting of LacA and LacB.

The catalysed reaction is aldehydo-D-galactose 6-phosphate = keto-D-tagatose 6-phosphate. It functions in the pathway carbohydrate metabolism; D-galactose 6-phosphate degradation; D-tagatose 6-phosphate from D-galactose 6-phosphate: step 1/1. The sequence is that of Galactose-6-phosphate isomerase subunit LacA from Streptococcus pneumoniae serotype 2 (strain D39 / NCTC 7466).